The following is a 139-amino-acid chain: Putative pre-16S rRNA nuclease (139 aa).

It belongs to the YqgF nuclease family.

The protein localises to the cytoplasm. In terms of biological role, could be a nuclease involved in processing of the 5'-end of pre-16S rRNA. In Phocaeicola vulgatus (strain ATCC 8482 / DSM 1447 / JCM 5826 / CCUG 4940 / NBRC 14291 / NCTC 11154) (Bacteroides vulgatus), this protein is Putative pre-16S rRNA nuclease.